A 536-amino-acid polypeptide reads, in one-letter code: ATP synthase subunit alpha, mitochondrial (536 aa).

The transit peptide at 1–27 directs the protein to the mitochondrion; the sequence is MLRQAGTRLLKVPVCGLRPSITLKRGY. 197-204 lines the ATP pocket; that stretch reads GDRQTGKT.

Belongs to the ATPase alpha/beta chains family. As to quaternary structure, F-type ATPases have 2 components, CF(1) - the catalytic core - and CF(0) - the membrane proton channel. CF(1) has five subunits: alpha(3), beta(3), gamma(1), delta(1), epsilon(1). CF(0) has three main subunits: a, b and c.

It localises to the mitochondrion. Its subcellular location is the mitochondrion inner membrane. In terms of biological role, mitochondrial membrane ATP synthase (F(1)F(0) ATP synthase or Complex V) produces ATP from ADP in the presence of a proton gradient across the membrane which is generated by electron transport complexes of the respiratory chain. F-type ATPases consist of two structural domains, F(1) - containing the extramembraneous catalytic core, and F(0) - containing the membrane proton channel, linked together by a central stalk and a peripheral stalk. During catalysis, ATP synthesis in the catalytic domain of F(1) is coupled via a rotary mechanism of the central stalk subunits to proton translocation. Subunits alpha and beta form the catalytic core in F(1). Rotation of the central stalk against the surrounding alpha(3)beta(3) subunits leads to hydrolysis of ATP in three separate catalytic sites on the beta subunits. Subunit alpha does not bear the catalytic high-affinity ATP-binding sites. The protein is ATP synthase subunit alpha, mitochondrial (atp1) of Schizosaccharomyces pombe (strain 972 / ATCC 24843) (Fission yeast).